The primary structure comprises 128 residues: Phosphoribosyl-AMP cyclohydrolase (128 aa).

Position 94 (D94) interacts with Mg(2+). C95 is a Zn(2+) binding site. Mg(2+) contacts are provided by D96 and D98. Positions 111 and 118 each coordinate Zn(2+).

Belongs to the PRA-CH family. In terms of assembly, homodimer. Mg(2+) serves as cofactor. It depends on Zn(2+) as a cofactor.

Its subcellular location is the cytoplasm. The enzyme catalyses 1-(5-phospho-beta-D-ribosyl)-5'-AMP + H2O = 1-(5-phospho-beta-D-ribosyl)-5-[(5-phospho-beta-D-ribosylamino)methylideneamino]imidazole-4-carboxamide. Its pathway is amino-acid biosynthesis; L-histidine biosynthesis; L-histidine from 5-phospho-alpha-D-ribose 1-diphosphate: step 3/9. Functionally, catalyzes the hydrolysis of the adenine ring of phosphoribosyl-AMP. The sequence is that of Phosphoribosyl-AMP cyclohydrolase from Streptomyces coelicolor (strain ATCC BAA-471 / A3(2) / M145).